We begin with the raw amino-acid sequence, 613 residues long: MNTNIFSTHLEFSKGVASVFKVIDTIHNISKNNNFNNILTQDFIIDTILSILWEDPNENEIFSSMIEDGETITNKNLSAQTKEGLLLNSNSFGLKFKYYNNAFRSWIDNYNPTSIDDVVYRFKDVNSICENNINEFKVKNYEVTVLPIYMQIANLHLLLLRDGMIYGDAWNLYRELGFSDQDSFYNHVLDKTKFYINDCLNYYNTGLSNLKLDPNNSWIDITRYCRFMTFYILDMISICPIYDTKVYDKPINMQTLTRKVYSDPVNFIDENIPISEYEKMYNISPELFSTLFSISFYTNKSGNKFLNGHVNRHVGTDLNYNGLRETHYGNYGSNYEVESMAFDDIKAYSNNYFNNTQNNNPTSVKSIKFLITKNNDEWIYGEPDSSNIDFTRNIQGYLSNLNNESYTHSLSDMILANNDKIQINIDTPHSYSYSWIYKGIEDTNYISDKLINQIPLVKEVKLKSRHYSEISVIKGPGFTGGDLILSKVHKPANQIPAQYMKNKITIPIKTKFPAGSQDFKVRLCYASNHDIGLIRLIAGSKYITTNIQQTFNTTENNPSLIYDDFKYFNFNETLSITSSGIDELYLEFYYSYTDGNFEDFPKLSIPYTRNYSC.

This sequence belongs to the delta endotoxin family.

The protein resides in the secreted. Its function is as follows. Toxin active on mosquito larvae of the species Aedes aegypti, Culex pipiens and Anopheles stephensi. The sequence is that of Pesticidal crystal-like protein Cry16Aa (cry16Aa) from Paraclostridium bifermentans (Clostridium bifermentans).